We begin with the raw amino-acid sequence, 201 residues long: MALKYPGGKEYRGNRLNAARQPMAADYANRGMTLEEDLNATNEYYRERGIAVVYKKPTPVQIVRVDYPKRSAAVIKEAYFRQASTTDYNGVYRGKYIDFEAKETKNKTAFPLKNFHAHQIRHMEQVMAHGGICFAILRFSVLNETYLLDAFHLIARWNEQEAGGRKSIPKREIEQYGHYIPLGYQPRIDYISVVEKVYFTV.

4 residues coordinate Mg(2+): Thr-85, Asp-87, Glu-100, and Gln-119.

It belongs to the RecU family. Mg(2+) serves as cofactor.

It localises to the cytoplasm. It catalyses the reaction Endonucleolytic cleavage at a junction such as a reciprocal single-stranded crossover between two homologous DNA duplexes (Holliday junction).. Functionally, endonuclease that resolves Holliday junction intermediates in genetic recombination. Cleaves mobile four-strand junctions by introducing symmetrical nicks in paired strands. Promotes annealing of linear ssDNA with homologous dsDNA. Required for DNA repair, homologous recombination and chromosome segregation. The polypeptide is Holliday junction resolvase RecU (Geobacillus thermodenitrificans (strain NG80-2)).